The sequence spans 213 residues: Ubiquitin-conjugating enzyme E2 S (213 aa).

The 147-residue stretch at 13–159 (QIIRQVAKEV…ARMMTEIHAK (147 aa)) folds into the UBC core domain. The active-site Glycyl thioester intermediate is Cys-97. Residues 157–213 (HAKPTTKTAPTKNEETNCPSTSGTQSTSEGPMAKKHAGDKNAAEKKKKEKKRALRRL) form a disordered region. The span at 174-185 (CPSTSGTQSTSE) shows a compositional bias: polar residues. A compositionally biased stretch (basic and acidic residues) spans 192 to 202 (HAGDKNAAEKK). Residues 203 to 213 (KKEKKRALRRL) are compositionally biased toward basic residues.

The protein belongs to the ubiquitin-conjugating enzyme family.

It catalyses the reaction S-ubiquitinyl-[E1 ubiquitin-activating enzyme]-L-cysteine + [E2 ubiquitin-conjugating enzyme]-L-cysteine = [E1 ubiquitin-activating enzyme]-L-cysteine + S-ubiquitinyl-[E2 ubiquitin-conjugating enzyme]-L-cysteine.. It participates in protein modification; protein ubiquitination. Catalyzes the covalent attachment of ubiquitin to other proteins. Acts as an essential factor of the anaphase promoting complex/cyclosome (APC/C), a cell cycle-regulated ubiquitin ligase that controls progression through mitosis. Acts by specifically elongating polyubiquitin chains initiated by the E2 enzyme UBCH10 on APC/C substrates, enhancing the degradation of APC/C substrates by the proteasome and promoting mitotic exit. The polypeptide is Ubiquitin-conjugating enzyme E2 S (Branchiostoma floridae (Florida lancelet)).